The primary structure comprises 484 residues: Cobyric acid synthase (484 aa).

The 192-residue stretch at 246–437 folds into the GATase cobBQ-type domain; sequence ALRVVVPALP…VHGLFDTPAA (192 aa). The Nucleophile role is filled by Cys-327. The active site involves His-429.

Belongs to the CobB/CobQ family. CobQ subfamily.

Its pathway is cofactor biosynthesis; adenosylcobalamin biosynthesis. Catalyzes amidations at positions B, D, E, and G on adenosylcobyrinic A,C-diamide. NH(2) groups are provided by glutamine, and one molecule of ATP is hydrogenolyzed for each amidation. This Paraburkholderia phymatum (strain DSM 17167 / CIP 108236 / LMG 21445 / STM815) (Burkholderia phymatum) protein is Cobyric acid synthase.